A 1170-amino-acid polypeptide reads, in one-letter code: DNA excision repair protein ERCC-5 (1170 aa).

The interval 1 to 78 (MGVQGLWKLL…RIRPIFVFDG (78 aa)) is N-domain. Lysine 8 is modified (N6-acetyllysine). Residue aspartate 30 participates in Mg(2+) binding. The tract at residues 31-67 (ISIWLNQALKGVRDSHGNVIENAHLLTLFHRLCKLLF) is DNA-binding; may bind to the undamaged single-strand DNA of the DNA repair bubble. Aspartate 77 is a binding site for Mg(2+). Residues 79-784 (DAPLLKKQTL…LRLFGVPYIQ (706 aa)) form a spacer region region. Disordered stretches follow at residues 304–479 (DSES…RCDT), 520–587 (HVSG…PKAC), and 600–701 (LENA…ECLL). Positions 306 to 323 (ESLPSSSNVHSVSSNLKS) are enriched in low complexity. Composition is skewed to basic and acidic residues over residues 324–336 (SPHEKVKPEREPE) and 363–373 (SREGRQSKERN). Serine 384 is subject to Phosphoserine. Positions 455–474 (TSGSSANGQTDSAHSFTTAS) are enriched in polar residues. Over residues 539–551 (THSDQGIDIHPED) the composition is skewed to basic and acidic residues. Polar residues predominate over residues 659 to 676 (SVVSNSELQTESSEASTH). Over residues 677 to 698 (LSEKDAEEPRETLEEGTSRDTE) the composition is skewed to basic and acidic residues. Phosphoserine is present on residues serine 704 and serine 705. The segment at 785 to 880 (APMEAEAQCA…VTAMEILNEF (96 aa)) is I-domain. Residues glutamate 788, glutamate 790, aspartate 809, and aspartate 811 each coordinate Mg(2+). Residues 819–835 (HVYKNFFNKNKFVEYYQ) are DNA-binding; may bind to the undamaged single-strand DNA of the DNA repair bubble. Residues 847 to 879 (RNKLINLAYLLGSDYTEGIPTVGCVTAMEILNE) form a DNA-binding; H2TH (helix-2turn-helix) motif which binds double-stranded DNA region. A Mg(2+)-binding site is contributed by aspartate 860. Residues 911–917 (TKVKKKL) are DNA-binding; may bind double-stranded DNA. Residues 980-1008 (LKHLNAHQTQLRIDSFFRLAQQEKQDAKL) are interaction with PCNA. The tract at residues 1010–1170 (KSHRLNRAVT…KSMKRRKKKT (161 aa)) is interaction with ERCC6/CSB. Residues 1033 to 1146 (LTKVTEALDD…DDEDKAKTVL (114 aa)) form a disordered region. Positions 1041–1060 (DDAKGKTQKRELPYKKETSV) are enriched in basic and acidic residues. The Nuclear localization signal 1 signature appears at 1049–1065 (KRELPYKKETSVPKRRR). The segment covering 1094 to 1110 (SVMSARQRSAAESSKIS) has biased composition (polar residues). Residues 1153–1170 (FGKKKLKLKSMKRRKKKT) carry the Nuclear localization signal 2 motif.

This sequence belongs to the XPG/RAD2 endonuclease family. XPG subfamily. In terms of assembly, monomer. Homodimer. Component of the homologous recombination repair (HR) complex composed of ERCC5/XPG, BRCA2, PALB2, DSS1 and RAD51. Within the complex, interacts with BRCA2 and PALB2. Interacts with RNA polymerase II. Interacts (via C-terminus) with ERCC6/CSB; the interaction stimulates ERCC6/CSB binding to the DNA repair bubble and ERCC6/CSB ATPase activity. May form a complex composed of RNA polymerase II, ERCC6/CSB and ERCC5/XPG which associates with the DNA repair bubble during transcription-coupled nucleotide excision repair. Interacts with BRCA1; the interaction promotes the release of BRCA1 from DNA. Interacts with PCNA. Interacts with NTHL1; the interaction stimulates NTHL1 activity and NTHL1 binding to its DNA substrate. Mg(2+) serves as cofactor.

The protein resides in the nucleus. It is found in the chromosome. Functionally, single-stranded structure-specific DNA endonuclease involved in DNA excision repair. Makes the 3'incision in DNA nucleotide excision repair (NER). Binds and bends DNA repair bubble substrate and breaks base stacking at the single-strand/double-strand DNA junction of the DNA bubble. Plays a role in base excision repair (BER) by promoting the binding of DNA glycosylase NTHL1 to its substrate and increasing NTHL1 catalytic activity that removes oxidized pyrimidines from DNA. Involved in transcription-coupled nucleotide excision repair (TCR) which allows RNA polymerase II-blocking lesions to be rapidly removed from the transcribed strand of active genes. Functions during the initial step of TCR in cooperation with ERCC6/CSB to recognized stalled RNA polymerase II. Also, stimulates ERCC6/CSB binding to the DNA repair bubble and ERCC6/CSB ATPase activity. Required for DNA replication fork maintenance and preservation of genomic stability. Involved in homologous recombination repair (HRR) induced by DNA replication stress by recruiting RAD51, BRCA2, and PALB2 to the damaged DNA site. During HRR, binds to the replication fork with high specificity and stabilizes it. Also, acts upstream of HRR, to promote the release of BRCA1 from DNA. In Mus musculus (Mouse), this protein is DNA excision repair protein ERCC-5 (Ercc5).